Here is a 365-residue protein sequence, read N- to C-terminus: Phosphoserine aminotransferase (365 aa).

Residue arginine 42 coordinates L-glutamate. Pyridoxal 5'-phosphate is bound by residues 76–77 (GR), tryptophan 102, threonine 156, aspartate 175, and glutamine 198. N6-(pyridoxal phosphate)lysine is present on lysine 199. 240-241 (NT) is a binding site for pyridoxal 5'-phosphate.

The protein belongs to the class-V pyridoxal-phosphate-dependent aminotransferase family. SerC subfamily. As to quaternary structure, homodimer. Pyridoxal 5'-phosphate serves as cofactor.

The protein localises to the cytoplasm. The catalysed reaction is O-phospho-L-serine + 2-oxoglutarate = 3-phosphooxypyruvate + L-glutamate. It carries out the reaction 4-(phosphooxy)-L-threonine + 2-oxoglutarate = (R)-3-hydroxy-2-oxo-4-phosphooxybutanoate + L-glutamate. Its pathway is amino-acid biosynthesis; L-serine biosynthesis; L-serine from 3-phospho-D-glycerate: step 2/3. The protein operates within cofactor biosynthesis; pyridoxine 5'-phosphate biosynthesis; pyridoxine 5'-phosphate from D-erythrose 4-phosphate: step 3/5. Its function is as follows. Catalyzes the reversible conversion of 3-phosphohydroxypyruvate to phosphoserine and of 3-hydroxy-2-oxo-4-phosphonooxybutanoate to phosphohydroxythreonine. The chain is Phosphoserine aminotransferase from Shewanella oneidensis (strain ATCC 700550 / JCM 31522 / CIP 106686 / LMG 19005 / NCIMB 14063 / MR-1).